Reading from the N-terminus, the 453-residue chain is Probable L-galactonate transporter (453 aa).

The segment at 1 to 23 is disordered; that stretch reads MEKENITIDPRSSFTPSSSADIP. Topologically, residues 1–42 are periplasmic; it reads MEKENITIDPRSSFTPSSSADIPVPPDGLVQRSTRIKRIQTT. The span at 10–20 shows a compositional bias: polar residues; that stretch reads PRSSFTPSSSA. The helical transmembrane segment at 43-63 threads the bilayer; the sequence is AMLLLFFAAVINYLDRSSLSV. Residues 64–71 are Cytoplasmic-facing; sequence ANLTIREE. A helical transmembrane segment spans residues 72-92; that stretch reads LGLSATEIGALLSVFSLAYGI. Residues 93 to 107 are Periplasmic-facing; the sequence is AQLPCGPLLDRKGPR. Residues 108–128 form a helical membrane-spanning segment; sequence LMLGLGMFFWSLFQAMSGMVH. Residues 129–174 lie on the Cytoplasmic side of the membrane; sequence NFTQFVLVRIGMGIGEAPMNPCGVKVINDWFNIKERGRPMGFFNAA. A helical membrane pass occupies residues 175 to 195; the sequence is STIGVAVSPPILAAMMLVMGW. Position 196 (R196) is a topological domain, periplasmic. Residues 197-217 form a helical membrane-spanning segment; the sequence is GMFITIGVLGIFLAIGWYMLY. Residues 218-259 lie on the Cytoplasmic side of the membrane; sequence RNREHVELTAVEQAYLNAGSVNARRDPLSFAEWRSLFRNRTM. The chain crosses the membrane as a helical span at residues 260 to 280; the sequence is WGMMLGFSGINYTAWLYLAWL. Topologically, residues 281-295 are periplasmic; the sequence is PGYLQTAYNLDLKST. Residues 296–316 traverse the membrane as a helical segment; it reads GLMAAIPFLFGAAGMLVNGYV. Residues 317 to 332 lie on the Cytoplasmic side of the membrane; sequence TDWLVKGGMAPIKSRK. The chain crosses the membrane as a helical span at residues 333 to 353; sequence ICIIAGMFCSAAFTLIVPQAT. Topologically, residues 354–359 are periplasmic; it reads TSMTAV. The helical transmembrane segment at 360–380 threads the bilayer; sequence LLIGMALFCIHFAGTSCWGLI. Topologically, residues 381–394 are cytoplasmic; sequence HVAVASRMTASVGS. Residues 395–415 form a helical membrane-spanning segment; the sequence is IQNFASFICASFAPIITGFIV. The Periplasmic portion of the chain corresponds to 416–422; sequence DTTHSFR. Residues 423-443 form a helical membrane-spanning segment; sequence LALIICGCVTAAGALAYIFLV. The Cytoplasmic portion of the chain corresponds to 444 to 453; the sequence is RQPINDPRKD.

This sequence belongs to the major facilitator superfamily. Phthalate permease family.

Its subcellular location is the cell inner membrane. The enzyme catalyses L-galactonate(in) + H(+)(in) = L-galactonate(out) + H(+)(out). In terms of biological role, probably responsible for the transport of L-galactonate from the periplasm across the inner membrane. Is essential for growth on L-galactonate as the sole carbon source. The protein is Probable L-galactonate transporter (lgoT) of Escherichia coli (strain K12).